The following is a 1218-amino-acid chain: ATP-dependent helicase/deoxyribonuclease subunit B (1218 aa).

The UvrD-like helicase ATP-binding domain maps to 1–279; sequence MRFIVGRAGT…VFLTETHRFE (279 aa). 6-13 contacts ATP; that stretch reads GRAGTGKS. The UvrD-like helicase C-terminal domain occupies 281–588; the sequence is AGLKHLERFY…LVGSLDRSRN (308 aa). Residue Cys786 coordinates [4Fe-4S] cluster. The segment at 987–1006 is disordered; it reads LAEGSKGSEGSEGSEDSEDS. Residues Cys1126, Cys1129, and Cys1135 each contribute to the [4Fe-4S] cluster site. Residues 1160 to 1169 show a composition bias toward polar residues; it reads RVQSQDSEQY. A disordered region spans residues 1160–1218; that stretch reads RVQSQDSEQYPEQHPPTSVPGETSRRALQKDGGNSPRGQELIWLGEDEAGAGKEDDGHE. Residues 1209-1218 are compositionally biased toward basic and acidic residues; sequence GAGKEDDGHE.

The protein belongs to the helicase family. AddB/RexB type 1 subfamily. As to quaternary structure, heterodimer of AddA and AddB. Requires Mg(2+) as cofactor. It depends on [4Fe-4S] cluster as a cofactor.

Its function is as follows. The heterodimer acts as both an ATP-dependent DNA helicase and an ATP-dependent, dual-direction single-stranded exonuclease. Recognizes the chi site generating a DNA molecule suitable for the initiation of homologous recombination. The AddB subunit has 5' -&gt; 3' nuclease activity but not helicase activity. The protein is ATP-dependent helicase/deoxyribonuclease subunit B of Desulfitobacterium hafniense (strain DSM 10664 / DCB-2).